The chain runs to 147 residues: MVHFTAEEKAAITSIWDKVDLEKVGGETLGRLLIVYPWTQRFFDKFGNLSSALAIMGNPRIRAHGKKVLTSLGLGVKNMDNLKETFAHLSELHCDKLHVDPENFKLLGNMLVIVLSTHFAKEFTPEVQAAWQKLVIGVANALSHKYH.

Positions 3–147 (HFTAEEKAAI…VANALSHKYH (145 aa)) constitute a Globin domain. Heme b contacts are provided by His64 and His93.

Belongs to the globin family. In terms of assembly, heterotetramer of two alpha chains and two beta chains. Red blood cells.

Its function is as follows. This is an embryonic beta-type chain. This is Hemoglobin subunit beta-H1 (Hbb-bh1) from Mus musculus (Mouse).